A 315-amino-acid chain; its full sequence is Phosphate transport system permease protein PstC (315 aa).

At 1–22 (MLTKSRKYFNQTWIESLFKQTT) the chain is on the cytoplasmic side. The chain crosses the membrane as a helical span at residues 23 to 43 (ALFALLVFILLAAILISLVIG). Residues 44-77 (SWESIKRFGGSFLLETYWDPVQEQYGAIIPILGT) lie on the Periplasmic side of the membrane. The ABC transmembrane type-1 domain occupies 74–302 (ILGTLITAGI…VITTMVLILS (229 aa)). The helical transmembrane segment at 78–98 (LITAGIALFIAVPISFGIAIF) threads the bilayer. The Cytoplasmic segment spans residues 99–117 (LTELAPNWLKRPISIAIEM). A helical transmembrane segment spans residues 118-138 (LAAIPSIIYGMWGLFVFVPLF). The Periplasmic portion of the chain corresponds to 139 to 164 (QEHIQPVLIDNLGNLPGLELFFSGVP). A helical transmembrane segment spans residues 165 to 185 (FGVGLFTAGLVLAIMIIPFIA). Residues 186–223 (SVMRDVFSIVPPMLKEGAYGLGATTWEVVRQVIVPHTR) are Cytoplasmic-facing. The chain crosses the membrane as a helical span at residues 224 to 244 (IGLVGSVMLGLGRALGETMAI). The Periplasmic segment spans residues 245-281 (TFIIGNSFQLPNSLFSPSTSIASAIANEFNEAGGLQK). A helical transmembrane segment spans residues 282–302 (SALMELGLLLFVITTMVLILS). Topologically, residues 303-315 (RLMITKMQQTKGK) are cytoplasmic.

This sequence belongs to the binding-protein-dependent transport system permease family. CysTW subfamily.

The protein resides in the cell inner membrane. Functionally, part of the binding-protein-dependent transport system for phosphate; probably responsible for the translocation of the substrate across the membrane. This chain is Phosphate transport system permease protein PstC (pstC), found in Haemophilus influenzae (strain ATCC 51907 / DSM 11121 / KW20 / Rd).